A 453-amino-acid chain; its full sequence is MTTDTIVAQATAPGRGGVGIIRISGDQASEVAMALLGHIPKTRYADYCDFKDGEGEVIDQGIALYFQGPNSFTGEDVLELQGHGGQIVLDMLIKRVMEVEGIRIAKPGEFSEQAFMNDKLDLTQAEAIADLIDATSEQAAKSALNSLQGEFSTQVHELVDRVTNLRLYVEAAIDFPDEEVDFLSDGKIAGSLYRIITKLDSVQASAKQGAIIREGMKVVIAGRPNAGKSSLLNALAGKESAIVTEIAGTTRDVLREHIHLDGMPLHIIDTAGLRDTADTVEQIGIERAWAEIETADQVLFMVDGTTTDAVDPHEIWPDFIDRLPEKLGITVVRNKADITGEALTVTQDHGHNVFRISAKTGLGVEELQQHLKSLMGYQSNLEGGFIARRRHLEALELATSHLMIGKEQLEVYQAGELLAEELRMTQMALSEITGKFTSDDLLGKIFSSFCIGK.

Residues R22, E79, and K119 each coordinate (6S)-5-formyl-5,6,7,8-tetrahydrofolate. Positions 215-376 (GMKVVIAGRP…LQQHLKSLMG (162 aa)) constitute a TrmE-type G domain. Residue N225 participates in K(+) binding. Residues 225-230 (NAGKSS), 244-250 (TEIAGTT), 269-272 (DTAG), and 334-337 (NKAD) contribute to the GTP site. S229 contacts Mg(2+). 3 residues coordinate K(+): T244, I246, and T249. T250 contacts Mg(2+). Residue K453 participates in (6S)-5-formyl-5,6,7,8-tetrahydrofolate binding.

Belongs to the TRAFAC class TrmE-Era-EngA-EngB-Septin-like GTPase superfamily. TrmE GTPase family. As to quaternary structure, homodimer. Heterotetramer of two MnmE and two MnmG subunits. Requires K(+) as cofactor.

Its subcellular location is the cytoplasm. Its function is as follows. Exhibits a very high intrinsic GTPase hydrolysis rate. Involved in the addition of a carboxymethylaminomethyl (cmnm) group at the wobble position (U34) of certain tRNAs, forming tRNA-cmnm(5)s(2)U34. The protein is tRNA modification GTPase MnmE of Shewanella sediminis (strain HAW-EB3).